The following is a 246-amino-acid chain: Ribosome maturation factor RimM (246 aa).

Over residues 1-15 (MKRKQESKGAGEKRQ) the composition is skewed to basic and acidic residues. A disordered region spans residues 1-63 (MKRKQESKGA…NPQFTTPNPD (63 aa)). A compositionally biased stretch (pro residues) spans 45–54 (VPSPQSPIPN). A PRC barrel domain is found at 158–239 (GEDEYHVVDL…RIEITPPPGL (82 aa)).

The protein belongs to the RimM family. Binds ribosomal protein uS19.

Its subcellular location is the cytoplasm. Its function is as follows. An accessory protein needed during the final step in the assembly of 30S ribosomal subunit, possibly for assembly of the head region. Essential for efficient processing of 16S rRNA. May be needed both before and after RbfA during the maturation of 16S rRNA. It has affinity for free ribosomal 30S subunits but not for 70S ribosomes. In Nostoc sp. (strain PCC 7120 / SAG 25.82 / UTEX 2576), this protein is Ribosome maturation factor RimM.